A 460-amino-acid polypeptide reads, in one-letter code: Phosphoenolpyruvate carboxylase (460 aa).

The protein belongs to the PEPCase type 2 family. Homotetramer. Mg(2+) serves as cofactor.

The catalysed reaction is oxaloacetate + phosphate = phosphoenolpyruvate + hydrogencarbonate. In terms of biological role, catalyzes the irreversible beta-carboxylation of phosphoenolpyruvate (PEP) to form oxaloacetate (OAA), a four-carbon dicarboxylic acid source for the tricarboxylic acid cycle. The chain is Phosphoenolpyruvate carboxylase from Pyrobaculum arsenaticum (strain DSM 13514 / JCM 11321 / PZ6).